The chain runs to 261 residues: 5'-nucleotidase SurE (261 aa).

A divalent metal cation is bound by residues aspartate 8, aspartate 9, serine 43, and asparagine 96.

The protein belongs to the SurE nucleotidase family. The cofactor is a divalent metal cation.

It localises to the cytoplasm. The enzyme catalyses a ribonucleoside 5'-phosphate + H2O = a ribonucleoside + phosphate. Functionally, nucleotidase that shows phosphatase activity on nucleoside 5'-monophosphates. The sequence is that of 5'-nucleotidase SurE from Dinoroseobacter shibae (strain DSM 16493 / NCIMB 14021 / DFL 12).